The primary structure comprises 334 residues: Glycerol-1-phosphate dehydrogenase [NAD(P)+] (334 aa).

NAD(+) is bound by residues 77–81 and 99–102; these read GRPID and TTAS. Residue aspartate 104 participates in substrate binding. Serine 108 contacts NAD(+). Position 147 (aspartate 147) interacts with substrate. 2 residues coordinate Zn(2+): aspartate 147 and histidine 225. Histidine 229 contacts substrate. Histidine 246 contributes to the Zn(2+) binding site.

This sequence belongs to the glycerol-1-phosphate dehydrogenase family. Zn(2+) is required as a cofactor.

It is found in the cytoplasm. It carries out the reaction sn-glycerol 1-phosphate + NAD(+) = dihydroxyacetone phosphate + NADH + H(+). The catalysed reaction is sn-glycerol 1-phosphate + NADP(+) = dihydroxyacetone phosphate + NADPH + H(+). It functions in the pathway membrane lipid metabolism; glycerophospholipid metabolism. Its function is as follows. Catalyzes the NAD(P)H-dependent reduction of dihydroxyacetonephosphate (DHAP or glycerone phosphate) to glycerol 1-phosphate (G1P). The G1P thus generated is used as the glycerophosphate backbone of phospholipids in the cellular membranes of Archaea. The polypeptide is Glycerol-1-phosphate dehydrogenase [NAD(P)+] (Methanococcus maripaludis (strain C7 / ATCC BAA-1331)).